Here is a 367-residue protein sequence, read N- to C-terminus: Glutamate 5-kinase (367 aa).

ATP is bound at residue Lys17. Substrate is bound by residues Ser57, Asp144, and Asn156. Residues 176–177 and 217–223 contribute to the ATP site; these read SD and TGGMTSK. The 79-residue stretch at 279 to 357 folds into the PUA domain; it reads AGALTLDEGA…SELPGELRRP (79 aa).

Belongs to the glutamate 5-kinase family.

The protein localises to the cytoplasm. It carries out the reaction L-glutamate + ATP = L-glutamyl 5-phosphate + ADP. Its pathway is amino-acid biosynthesis; L-proline biosynthesis; L-glutamate 5-semialdehyde from L-glutamate: step 1/2. Its function is as follows. Catalyzes the transfer of a phosphate group to glutamate to form L-glutamate 5-phosphate. The sequence is that of Glutamate 5-kinase from Mycolicibacterium paratuberculosis (strain ATCC BAA-968 / K-10) (Mycobacterium paratuberculosis).